The chain runs to 456 residues: GTPase Der (456 aa).

EngA-type G domains follow at residues 4 to 169 (PVVA…PSKD) and 178 to 353 (VQLA…DQSR). GTP is bound by residues 10-17 (GRPNVGKS), 57-61 (DTGGL), 120-123 (NKCE), 184-191 (GRPNVGKS), 231-235 (DTAGI), and 296-299 (NKWD). Residues 354-439 (RRVTTSVVNE…PIKLFWRGKQ (86 aa)) form the KH-like domain.

It belongs to the TRAFAC class TrmE-Era-EngA-EngB-Septin-like GTPase superfamily. EngA (Der) GTPase family. In terms of assembly, associates with the 50S ribosomal subunit.

Functionally, GTPase that plays an essential role in the late steps of ribosome biogenesis. This is GTPase Der from Prochlorococcus marinus (strain NATL1A).